The chain runs to 246 residues: Protein-glutamine gamma-glutamyltransferase (246 aa).

The protein belongs to the bacillus TGase family.

It catalyses the reaction L-glutaminyl-[protein] + L-lysyl-[protein] = [protein]-L-lysyl-N(6)-5-L-glutamyl-[protein] + NH4(+). In terms of biological role, probably plays a role in the assembly of the spore coat proteins by catalyzing epsilon-(gamma-glutamyl)lysine cross-links. The polypeptide is Protein-glutamine gamma-glutamyltransferase (Bacillus pumilus (strain SAFR-032)).